A 225-amino-acid chain; its full sequence is Putative tyrosine-protein phosphatase OCA1 (225 aa).

The segment covering 1 to 11 (MTDNCREDDDN) has biased composition (acidic residues). Residues 1–24 (MTDNCREDDDNLGTSGDNALSAPT) form a disordered region. Positions 12–24 (LGTSGDNALSAPT) are enriched in polar residues. Residues 42-196 (NFCPVERYLY…FDTKSVTIDK (155 aa)) enclose the Tyrosine-protein phosphatase domain. The active-site Phosphocysteine intermediate is the Cys138.

Belongs to the protein-tyrosine phosphatase family.

It is found in the cytoplasm. It catalyses the reaction O-phospho-L-tyrosyl-[protein] + H2O = L-tyrosyl-[protein] + phosphate. Putative tyrosine-protein phosphatase required for protection against superoxide stress. The polypeptide is Putative tyrosine-protein phosphatase OCA1 (OCA1) (Eremothecium gossypii (strain ATCC 10895 / CBS 109.51 / FGSC 9923 / NRRL Y-1056) (Yeast)).